We begin with the raw amino-acid sequence, 175 residues long: Bifunctional protein PyrR (175 aa).

Substrate is bound by residues 40–41 (TR), R85, 102–110 (DDVLYTGRT), R135, and V159. The short motif at 98 to 110 (VVIIDDVLYTGRT) is the PRPP-binding element.

The protein belongs to the purine/pyrimidine phosphoribosyltransferase family. PyrR subfamily. Homodimer and homohexamer; in equilibrium.

The enzyme catalyses UMP + diphosphate = 5-phospho-alpha-D-ribose 1-diphosphate + uracil. Functionally, regulates transcriptional attenuation of the pyrimidine nucleotide (pyr) operon by binding in a uridine-dependent manner to specific sites on pyr mRNA. This disrupts an antiterminator hairpin in the RNA and favors formation of a downstream transcription terminator, leading to a reduced expression of downstream genes. Its function is as follows. Also displays a weak uracil phosphoribosyltransferase activity which is not physiologically significant. This Staphylococcus epidermidis (strain ATCC 35984 / DSM 28319 / BCRC 17069 / CCUG 31568 / BM 3577 / RP62A) protein is Bifunctional protein PyrR.